A 204-amino-acid polypeptide reads, in one-letter code: Leucyl/phenylalanyl-tRNA--protein transferase (204 aa).

This sequence belongs to the L/F-transferase family.

It is found in the cytoplasm. The catalysed reaction is N-terminal L-lysyl-[protein] + L-leucyl-tRNA(Leu) = N-terminal L-leucyl-L-lysyl-[protein] + tRNA(Leu) + H(+). It carries out the reaction N-terminal L-arginyl-[protein] + L-leucyl-tRNA(Leu) = N-terminal L-leucyl-L-arginyl-[protein] + tRNA(Leu) + H(+). It catalyses the reaction L-phenylalanyl-tRNA(Phe) + an N-terminal L-alpha-aminoacyl-[protein] = an N-terminal L-phenylalanyl-L-alpha-aminoacyl-[protein] + tRNA(Phe). Its function is as follows. Functions in the N-end rule pathway of protein degradation where it conjugates Leu, Phe and, less efficiently, Met from aminoacyl-tRNAs to the N-termini of proteins containing an N-terminal arginine or lysine. The protein is Leucyl/phenylalanyl-tRNA--protein transferase of Rhizobium meliloti (strain 1021) (Ensifer meliloti).